We begin with the raw amino-acid sequence, 89 residues long: Large ribosomal subunit protein bL27 (89 aa).

It belongs to the bacterial ribosomal protein bL27 family.

The protein is Large ribosomal subunit protein bL27 of Synechococcus sp. (strain JA-3-3Ab) (Cyanobacteria bacterium Yellowstone A-Prime).